Reading from the N-terminus, the 339-residue chain is UDP-N-acetylglucosamine--N-acetylmuramyl-(pentapeptide) pyrophosphoryl-undecaprenol N-acetylglucosamine transferase (339 aa).

UDP-N-acetyl-alpha-D-glucosamine is bound by residues 11 to 13 (TGG), N127, R170, S188, I235, and Q280.

Belongs to the glycosyltransferase 28 family. MurG subfamily.

The protein localises to the cell inner membrane. It carries out the reaction di-trans,octa-cis-undecaprenyl diphospho-N-acetyl-alpha-D-muramoyl-L-alanyl-D-glutamyl-meso-2,6-diaminopimeloyl-D-alanyl-D-alanine + UDP-N-acetyl-alpha-D-glucosamine = di-trans,octa-cis-undecaprenyl diphospho-[N-acetyl-alpha-D-glucosaminyl-(1-&gt;4)]-N-acetyl-alpha-D-muramoyl-L-alanyl-D-glutamyl-meso-2,6-diaminopimeloyl-D-alanyl-D-alanine + UDP + H(+). The protein operates within cell wall biogenesis; peptidoglycan biosynthesis. In terms of biological role, cell wall formation. Catalyzes the transfer of a GlcNAc subunit on undecaprenyl-pyrophosphoryl-MurNAc-pentapeptide (lipid intermediate I) to form undecaprenyl-pyrophosphoryl-MurNAc-(pentapeptide)GlcNAc (lipid intermediate II). This Thermotoga sp. (strain RQ2) protein is UDP-N-acetylglucosamine--N-acetylmuramyl-(pentapeptide) pyrophosphoryl-undecaprenol N-acetylglucosamine transferase.